We begin with the raw amino-acid sequence, 374 residues long: Quinolinate synthase (374 aa).

Residues His-53 and Ser-70 each coordinate iminosuccinate. Residue Cys-116 participates in [4Fe-4S] cluster binding. Iminosuccinate is bound by residues 148-150 (YMN) and Ser-169. A [4Fe-4S] cluster-binding site is contributed by Cys-236. Residues 262–264 (HPE) and Thr-279 each bind iminosuccinate. Cys-327 contacts [4Fe-4S] cluster.

It belongs to the quinolinate synthase family. Type 3 subfamily. [4Fe-4S] cluster is required as a cofactor.

The protein localises to the cytoplasm. It carries out the reaction iminosuccinate + dihydroxyacetone phosphate = quinolinate + phosphate + 2 H2O + H(+). It participates in cofactor biosynthesis; NAD(+) biosynthesis; quinolinate from iminoaspartate: step 1/1. Its function is as follows. Catalyzes the condensation of iminoaspartate with dihydroxyacetone phosphate to form quinolinate. The protein is Quinolinate synthase of Halobacterium salinarum (strain ATCC 29341 / DSM 671 / R1).